Here is a 207-residue protein sequence, read N- to C-terminus: Serotonin N-acetyltransferase (207 aa).

The disordered stretch occupies residues Met1 to Arg29. Residues Arg28 to Asn35 form a YWHAZ-binding region. The residue at position 31 (Thr31) is a Phosphothreonine; by PKA. The N-acetyltransferase domain maps to Asn35–Arg196. Leu124 contacts substrate. Acetyl-CoA is bound by residues Leu124–Val126 and Gln132–Ser137. Met159 is a binding site for substrate. Residue Tyr168–Arg170 participates in acetyl-CoA binding. Phosphoserine; by PKA is present on Ser205.

The protein belongs to the acetyltransferase family. AANAT subfamily. As to quaternary structure, monomer. Interacts with several 14-3-3 proteins, including YWHAB, YWHAE, YWHAG and YWHAZ, preferentially when phosphorylated at Thr-31. Phosphorylation on Ser-205 also allows binding to YWHAZ, but with a 10-fold lower affinity. The interaction with YWHAZ considerably increases affinity for arylalkylamines and acetyl-CoA and protects the enzyme from dephosphorylation and proteasomal degradation. It may also prevent thiol-dependent inactivation. The physiological stoichiometry of the interaction is not clear. In vitro studies show either 1:2 (i.e. 1 AANAT molecule per YWHAZ dimer) or 2:2. Post-translationally, cAMP-dependent phosphorylation on both N-terminal Thr-31 and C-terminal Ser-205 regulates AANAT activity by promoting interaction with 14-3-3 proteins. Highest expression in the pineal gland, followed by retina. Expressed at much lower levels in brainstem and pituitary gland. AANAT activity also detected at low levels in the olfactory lobe.

Its subcellular location is the cytoplasm. It carries out the reaction a 2-arylethylamine + acetyl-CoA = an N-acetyl-2-arylethylamine + CoA + H(+). Its pathway is aromatic compound metabolism; melatonin biosynthesis; melatonin from serotonin: step 1/2. Functionally, controls the night/day rhythm of melatonin production in the pineal gland. Catalyzes the N-acetylation of serotonin into N-acetylserotonin, the penultimate step in the synthesis of melatonin. This is Serotonin N-acetyltransferase (AANAT) from Ovis aries (Sheep).